The following is a 297-amino-acid chain: Glutamyl-Q tRNA(Asp) synthetase (297 aa).

L-glutamate is bound by residues 7–11 (RFAPS) and Glu43. A 'HIGH' region motif is present at residues 10–20 (PSPTGPLHFGS). Positions 99, 101, 122, and 126 each coordinate Zn(2+). L-glutamate-binding residues include Tyr182 and Arg200. Positions 238–242 (KLSKQ) match the 'KMSKS' region motif. Residue Lys241 coordinates ATP.

Belongs to the class-I aminoacyl-tRNA synthetase family. GluQ subfamily. The cofactor is Zn(2+).

Its function is as follows. Catalyzes the tRNA-independent activation of glutamate in presence of ATP and the subsequent transfer of glutamate onto a tRNA(Asp). Glutamate is transferred on the 2-amino-5-(4,5-dihydroxy-2-cyclopenten-1-yl) moiety of the queuosine in the wobble position of the QUC anticodon. The sequence is that of Glutamyl-Q tRNA(Asp) synthetase from Burkholderia pseudomallei (strain K96243).